The chain runs to 684 residues: DNA ligase (684 aa).

Residues 34–38 (DYDFD), 83–84 (SL), and Glu-117 each bind NAD(+). Lys-119 (N6-AMP-lysine intermediate) is an active-site residue. 4 residues coordinate NAD(+): Arg-140, Glu-188, Lys-301, and Lys-325. Zn(2+) contacts are provided by Cys-419, Cys-422, Cys-437, and Cys-443. In terms of domain architecture, BRCT spans 602-684 (DAPQTFAGMT…QTMLAAESGD (83 aa)).

This sequence belongs to the NAD-dependent DNA ligase family. LigA subfamily. Mg(2+) is required as a cofactor. Requires Mn(2+) as cofactor.

The enzyme catalyses NAD(+) + (deoxyribonucleotide)n-3'-hydroxyl + 5'-phospho-(deoxyribonucleotide)m = (deoxyribonucleotide)n+m + AMP + beta-nicotinamide D-nucleotide.. In terms of biological role, DNA ligase that catalyzes the formation of phosphodiester linkages between 5'-phosphoryl and 3'-hydroxyl groups in double-stranded DNA using NAD as a coenzyme and as the energy source for the reaction. It is essential for DNA replication and repair of damaged DNA. In Chloroherpeton thalassium (strain ATCC 35110 / GB-78), this protein is DNA ligase.